A 257-amino-acid chain; its full sequence is Flap endonuclease Xni (257 aa).

Mg(2+) is bound at residue Asp112. In terms of domain architecture, 5'-3' exonuclease spans 169–256; sequence EQKKLVEFWA…LGFSLKQLRL (88 aa). 5 residues coordinate K(+): Phe179, Ala180, Pro188, Val190, and Ile193. Residues 192–197 form an interaction with DNA region; sequence GIGTKS.

It belongs to the Xni family. Mg(2+) serves as cofactor. The cofactor is K(+).

In terms of biological role, has flap endonuclease activity. During DNA replication, flap endonucleases cleave the 5'-overhanging flap structure that is generated by displacement synthesis when DNA polymerase encounters the 5'-end of a downstream Okazaki fragment. The polypeptide is Flap endonuclease Xni (Pseudoalteromonas translucida (strain TAC 125)).